We begin with the raw amino-acid sequence, 152 residues long: Ribosome maturation factor RimP (152 aa).

Belongs to the RimP family.

It is found in the cytoplasm. In terms of biological role, required for maturation of 30S ribosomal subunits. This chain is Ribosome maturation factor RimP, found in Pseudothermotoga lettingae (strain ATCC BAA-301 / DSM 14385 / NBRC 107922 / TMO) (Thermotoga lettingae).